Consider the following 608-residue polypeptide: Fatty acid amide hydrolase (608 aa).

Active-site charge relay system residues include lysine 206 and serine 282. Glycine 303–serine 306 is a binding site for substrate. Serine 306 acts as the Acyl-ester intermediate in catalysis.

This sequence belongs to the amidase family. In terms of assembly, forms homodimers.

The protein resides in the endoplasmic reticulum membrane. The protein localises to the cell membrane. The enzyme catalyses N-(9Z,12Z-octadecadienoyl)-ethanolamine + H2O = ethanolamine + (9Z,12Z)-octadecadienoate. It carries out the reaction N-hexadecanoylethanolamine + H2O = ethanolamine + hexadecanoate. The catalysed reaction is N-dodecanoylethanolamine + H2O = dodecanoate + ethanolamine. With respect to regulation, inhibited by methyl arachidonyl fluorophosphonate (MAFP). Catalyzes the hydrolysis of bioactive endogenous fatty acid amides to their corresponding acids. The hydrolysis of endogenous amidated lipids terminates their participation as lipid mediators in various signaling systems. Converts a wide range of N-acylethanolamines (NAEs) to their corresponding free fatty acids and ethanolamine. The protein is Fatty acid amide hydrolase of Oryza sativa subsp. indica (Rice).